The primary structure comprises 970 residues: Anaphase-promoting complex subunit 3 (970 aa).

TPR repeat units lie at residues 35–68, 74–107, 142–175, and 185–218; these read EDNL…TMIK, ALSN…NNNN, NNNS…NSIS, and GSVY…YPFL. The segment at 106–149 is disordered; that stretch reads NNNNNNNNNNNNNNNNNNNNNNNKDKCNNSNKNNDSNNNSNSNN. Residues 274 to 300 form a disordered region; that stretch reads KVNNNNNNNNNNNNNINNNNSSNKNNE. 2 TPR repeats span residues 319 to 353 and 361 to 394; these read IKPN…TPIN and TNQQ…TPQT. Disordered stretches follow at residues 358-379, 414-525, and 556-582; these read IQQT…PSQQ, PIPM…TTTT, and SSLS…HNKS. Residues 359–379 show a composition bias toward low complexity; sequence QQTNQQQQQQQQQQPQQPSQQ. A compositionally biased stretch (polar residues) spans 424-443; that stretch reads SKGSQHPPSSNSQTPYTPST. The span at 446–460 shows a compositional bias: basic residues; the sequence is VHHHQKQQPHQHKKS. Residues 500-525 show a composition bias toward low complexity; sequence TSSTSKQQQQQQQTKQQTTTTTTTTT. TPR repeat units follow at residues 546–580, 636–671, 672–705, 740–773, 775–807, 808–841, 843–876, 878–910, and 911–944; these read TEEF…HHHN, LELF…QYRT, GWVL…EPYR, PYSW…DPDM, YAYT…DPRH, YNAF…NESS, VLCC…QPKN, FAKF…EPKE, and TPIY…DPKN. The span at 570–580 shows a compositional bias: basic residues; sequence YQQHHHLHHHN.

It belongs to the APC3/CDC27 family. The APC/C is composed of at least 13 subunits that stay tightly associated throughout the cell cycle: anapc1, anapc2, anapc3, anapc4, anapc5, anapc6, anapc7, anapc8, anapc10, anapc11, cdc20, cdc26 and cdh1.

It is found in the nucleus. It participates in protein modification; protein ubiquitination. In terms of biological role, component of the anaphase promoting complex/cyclosome (APC/C), a cell cycle-regulated E3 ubiquitin-protein ligase complex that controls progression through mitosis and the G1 phase of the cell cycle. The sequence is that of Anaphase-promoting complex subunit 3 (anapc3) from Dictyostelium discoideum (Social amoeba).